We begin with the raw amino-acid sequence, 611 residues long: Dihydroxy-acid dehydratase (611 aa).

Asp81 contacts Mg(2+). Residue Cys122 coordinates [2Fe-2S] cluster. Residues Asp123 and Lys124 each coordinate Mg(2+). The residue at position 124 (Lys124) is an N6-carboxylysine. Cys195 contributes to the [2Fe-2S] cluster binding site. Glu491 contributes to the Mg(2+) binding site. Ser517 serves as the catalytic Proton acceptor.

This sequence belongs to the IlvD/Edd family. As to quaternary structure, homodimer. It depends on [2Fe-2S] cluster as a cofactor. Mg(2+) serves as cofactor.

The enzyme catalyses (2R)-2,3-dihydroxy-3-methylbutanoate = 3-methyl-2-oxobutanoate + H2O. It catalyses the reaction (2R,3R)-2,3-dihydroxy-3-methylpentanoate = (S)-3-methyl-2-oxopentanoate + H2O. It functions in the pathway amino-acid biosynthesis; L-isoleucine biosynthesis; L-isoleucine from 2-oxobutanoate: step 3/4. Its pathway is amino-acid biosynthesis; L-valine biosynthesis; L-valine from pyruvate: step 3/4. Functionally, functions in the biosynthesis of branched-chain amino acids. Catalyzes the dehydration of (2R,3R)-2,3-dihydroxy-3-methylpentanoate (2,3-dihydroxy-3-methylvalerate) into 2-oxo-3-methylpentanoate (2-oxo-3-methylvalerate) and of (2R)-2,3-dihydroxy-3-methylbutanoate (2,3-dihydroxyisovalerate) into 2-oxo-3-methylbutanoate (2-oxoisovalerate), the penultimate precursor to L-isoleucine and L-valine, respectively. This is Dihydroxy-acid dehydratase from Agrobacterium fabrum (strain C58 / ATCC 33970) (Agrobacterium tumefaciens (strain C58)).